Here is a 216-residue protein sequence, read N- to C-terminus: Protein ORM2 (216 aa).

The segment at 1–50 (MIDRTKNESPAFEESPLTPNVSNLKPFPSQSNKISTPVTDHRRRRSSSVI) is disordered. The Cytoplasmic segment spans residues 1–78 (MIDRTKNESP…NMNATWVDQR (78 aa)). S9 and S15 each carry phosphoserine. A compositionally biased stretch (polar residues) spans 17-38 (LTPNVSNLKPFPSQSNKISTPV). T18 is subject to Phosphothreonine. Phosphoserine occurs at positions 22, 29, and 51. The chain crosses the membrane as a helical span at residues 79–99 (GAWLIHIVVIVLLRLFYSLFG). Over 100 to 103 (STPK) the chain is Extracellular. The chain crosses the membrane as a helical span at residues 104–124 (WTWTLTNMTYIIGFYIMFHLV). Topologically, residues 125–148 (KGTPFDFNGGAYDNLTMWEQINDE) are cytoplasmic. A helical transmembrane segment spans residues 149–169 (TLYTPTRKFLLIVPIVLFLIS). Residues 170 to 177 (NQYYRNDM) lie on the Extracellular side of the membrane. A helical membrane pass occupies residues 178–198 (TLFLSNLAVTVLIGVVPKLGI). The Cytoplasmic portion of the chain corresponds to 199–216 (THRLRISIPGITGRAQIS).

The protein belongs to the ORM family. As to quaternary structure, component of the SPOTS complex, at least composed of LCB1/2 (LCB1 and/or LCB2), ORM1/2 (ORM1 and/or ORM2), SAC1 and TSC3. Phosphorylated in case of disruption of sphingolipid synthesis. Phosphorylation regulates the inhibitory activity of serine palmitoyltransferases (LCB1 and LCB2).

The protein resides in the endoplasmic reticulum membrane. Its function is as follows. Component of the SPOTS complex that acts as a negative regulator of sphingolipid synthesis. Acts by inhibiting serine palmitoyltransferases (LCB1 and LCB2) activity. Along with ORM1, plays a role in the phosphorylation of LAC1 and YPK1, the distribution of actin patches between mother and daughter cells, and in endocytosis. This Saccharomyces cerevisiae (strain ATCC 204508 / S288c) (Baker's yeast) protein is Protein ORM2 (ORM2).